The primary structure comprises 154 residues: Ribosome maturation factor RimP (154 aa).

It belongs to the RimP family.

Its subcellular location is the cytoplasm. Functionally, required for maturation of 30S ribosomal subunits. The protein is Ribosome maturation factor RimP of Heliobacterium modesticaldum (strain ATCC 51547 / Ice1).